Reading from the N-terminus, the 118-residue chain is Large ribosomal subunit protein bL20 (118 aa).

It belongs to the bacterial ribosomal protein bL20 family.

Its function is as follows. Binds directly to 23S ribosomal RNA and is necessary for the in vitro assembly process of the 50S ribosomal subunit. It is not involved in the protein synthesizing functions of that subunit. The sequence is that of Large ribosomal subunit protein bL20 from Synechococcus sp. (strain JA-2-3B'a(2-13)) (Cyanobacteria bacterium Yellowstone B-Prime).